The following is a 705-amino-acid chain: MKPIKKSITYGHHTLTIETGEIAKQAHGAVMVSMDDTVVLVTVVGDKKTKPGQDFFPLTVDYQEKFYSAGRIPGSFFKREGRPSEKEILTSRLIDRPIRPLFPDGFYNEVQVIAMVLSSDAEIDADIPATIGASAALILSGIPFDGPIGAARVGYIDNEYVLNPTTTQLNKSQLNLVVAGTQKAVLMVESEANELSEDVMLGAVTYGHDQMQQVINMINELADETGVTAWDWQPAEKDHSLIEKITQLAEADLRDAFRLKQKSVRTEAISEIWQRVFTELKAGTEEGPSEQTIKEIGFALEAKIVRNSILDGESRIDGRGTRTVRPITIRHGVLPRTHGSALFTRGETQALVVTTLGTARDEQKIDALQGDYSERFMLHYNMPPFATGETGRVGSPKRREIGHGRLAKRALLAVLPPVEEFGYAMRVVSEVTESNGSSSMASVCGGCLALMDAGAPLKAHVAGIAMGLIKEGNRFAVLTDILGDEDHLGDMDFKVAGTEEGITALQMDIKIQGITKEIMQVALLQAKEGRLHILDIMKQSLPIARDSVSVHAPRIIKFKINPEKIRDVIGKGGAVIRALTEETGTTIDISDDGSVTIASISNEGGEQAKRRIENITADVEVGKIYEGTVLKLLDFGAIVSILPGKDGLLHISQIANERVESVADHLKEGQIIRVKVLEADDKGRLRLSMKAASTEAAATPENGEK.

2 residues coordinate Mg(2+): aspartate 486 and aspartate 492. The KH domain occupies 553–612; the sequence is PRIIKFKINPEKIRDVIGKGGAVIRALTEETGTTIDISDDGSVTIASISNEGGEQAKRRI. In terms of domain architecture, S1 motif spans 622–690; it reads GKIYEGTVLK…DKGRLRLSMK (69 aa).

The protein belongs to the polyribonucleotide nucleotidyltransferase family. It depends on Mg(2+) as a cofactor.

It localises to the cytoplasm. It carries out the reaction RNA(n+1) + phosphate = RNA(n) + a ribonucleoside 5'-diphosphate. Its function is as follows. Involved in mRNA degradation. Catalyzes the phosphorolysis of single-stranded polyribonucleotides processively in the 3'- to 5'-direction. This Nitrosomonas eutropha (strain DSM 101675 / C91 / Nm57) protein is Polyribonucleotide nucleotidyltransferase.